A 238-amino-acid chain; its full sequence is CD209 antigen-like protein A (238 aa).

Residues 1-51 (MSDSKEMGKRQLRPLDEELLTSSHTRHSIKGFGFQTNSGFSSFTGCLVHSQ) lie on the Cytoplasmic side of the membrane. A helical; Signal-anchor for type II membrane protein membrane pass occupies residues 52–72 (VPLALQVLFLAVCSVLLVVIL). Residues 73–238 (VKVYKIPSSQ…KKLSTSCPSK (166 aa)) lie on the Extracellular side of the membrane. A disulfide bridge links Cys108 with Cys119. One can recognise a C-type lectin domain in the interval 115–229 (FQGSCYFFSV…CTNKKFWICK (115 aa)). A glycan (N-linked (GlcNAc...) asparagine) is linked at Asn130. Disulfide bonds link Cys136-Cys228 and Cys207-Cys220. Ca(2+) is bound by residues Glu198, Asn200, Leu202, Glu205, Asn216, and Asp217. Asn216 carries an N-linked (GlcNAc...) asparagine glycan.

In terms of tissue distribution, predominantly expressed in dendritic cells. Detected at very low levels in lung, spleen, lymph nodes and bone marrow.

It localises to the membrane. Its function is as follows. Probable pathogen-recognition receptor. May mediate the endocytosis of pathogens which are subsequently degraded in lysosomal compartments. May recognize in a calcium-dependent manner high mannose N-linked oligosaccharides in a variety of pathogen antigens. This Mus musculus (Mouse) protein is CD209 antigen-like protein A (Cd209a).